The chain runs to 344 residues: Heat-inducible transcription repressor HrcA (344 aa).

The protein belongs to the HrcA family.

In terms of biological role, negative regulator of class I heat shock genes (grpE-dnaK-dnaJ and groELS operons). Prevents heat-shock induction of these operons. This is Heat-inducible transcription repressor HrcA from Anoxybacillus flavithermus (strain DSM 21510 / WK1).